Here is a 174-residue protein sequence, read N- to C-terminus: uncharacterized protein (174 aa).

This is an uncharacterized protein from Archaeoglobus fulgidus (strain ATCC 49558 / DSM 4304 / JCM 9628 / NBRC 100126 / VC-16).